The following is a 443-amino-acid chain: Endoplasmic reticulum protein SC65 (443 aa).

A signal peptide spans 1–18 (MARAAWGLLWLLLGSAGA). Positions 81-102 (SGPATSQPRPAPGPDGDNEGDG) are disordered. An N-linked (GlcNAc...) asparagine glycan is attached at N367. Composition is skewed to acidic residues over residues 387-398 (DEMELEETESLP), 407-419 (AEFE…EEGL), and 431-443 (GDED…PELA). The tract at residues 387 to 443 (DEMELEETESLPEPEKPLSDAEFEGEGDYEEGLYADWWQEPDAKGDEDEAEPEPELA) is disordered.

Belongs to the leprecan family. Interacts with PLOD1, P3H3 and PPIB. Identified in a complex with PLOD1 and P3H3. Found in testis, brain, heart and at a much lower level in liver.

It is found in the endoplasmic reticulum. Functionally, part of a complex composed of PLOD1, P3H3 and P3H4 that catalyzes hydroxylation of lysine residues in collagen alpha chains and is required for normal assembly and cross-linking of collagen fibrils. Required for normal bone density and normal skin stability via its role in hydroxylation of lysine residues in collagen alpha chains and in collagen fibril assembly. The polypeptide is Endoplasmic reticulum protein SC65 (Rattus norvegicus (Rat)).